The sequence spans 384 residues: Ferrochelatase, mitochondrial (384 aa).

Cys-156 serves as a coordination point for [2Fe-2S] cluster. Catalysis depends on residues His-190 and Asn-343. 3 residues coordinate [2Fe-2S] cluster: Cys-363, Cys-366, and Cys-371.

It belongs to the ferrochelatase family. In terms of assembly, homodimer. Homotetramer. [2Fe-2S] cluster is required as a cofactor.

The protein resides in the mitochondrion inner membrane. The catalysed reaction is heme b + 2 H(+) = protoporphyrin IX + Fe(2+). The protein operates within porphyrin-containing compound metabolism; protoheme biosynthesis; protoheme from protoporphyrin-IX: step 1/1. Its function is as follows. Catalyzes the ferrous insertion into protoporphyrin IX. Terminal enzyme in heme biosynthesis. Contains four conserved cysteines that function as cluster ligands and play a crucial role in maintaining protein structure. This Drosophila melanogaster (Fruit fly) protein is Ferrochelatase, mitochondrial.